The chain runs to 194 residues: MRMKKSALTLAVLSSLFSGYSLAAPAENNTSQANLDFTGKVTASLCQVDTSNLSQTIDLGELSTSALKATGKGPAKSFAVNLINCDTTLNSIKYTIAGNNNTGSDTKYLVPASNDTSASGVGVYIQDNNAQAVEIGTEKTVPVVSNGGLALSDQSIPLQAYIGTTTGNPDTNGGVTAGTVTASAVMTIRSAGTP.

The N-terminal stretch at 1 to 23 (MRMKKSALTLAVLSSLFSGYSLA) is a signal peptide. An intrachain disulfide couples cysteine 46 to cysteine 85.

It belongs to the fimbrial protein family.

It is found in the fimbrium. The protein is Fimbrial protein 987P (fasA) of Escherichia coli.